We begin with the raw amino-acid sequence, 113 residues long: Urotensin-2B (113 aa).

The first 27 residues, 1-27 (MKVFSTSLWCGLLTLLSVMNLFKSVRG), serve as a signal peptide directing secretion. Residues 28–103 (RPHLSSGHEL…LDNLSSSHTK (76 aa)) constitute a propeptide that is removed on maturation. Cys-107 and Cys-112 are disulfide-bonded.

This sequence belongs to the urotensin-2 family.

It is found in the secreted. Its function is as follows. Potent vasoconstrictor. The protein is Urotensin-2B (Uts2b) of Mus musculus (Mouse).